We begin with the raw amino-acid sequence, 632 residues long: 1-deoxy-D-xylulose-5-phosphate synthase (632 aa).

Thiamine diphosphate is bound by residues His77 and 118–120 (GHS). Position 149 (Asp149) interacts with Mg(2+). Thiamine diphosphate contacts are provided by residues 150–151 (GA), Asn178, Tyr289, and Glu372. Asn178 lines the Mg(2+) pocket.

It belongs to the transketolase family. DXPS subfamily. Homodimer. Mg(2+) serves as cofactor. The cofactor is thiamine diphosphate.

The catalysed reaction is D-glyceraldehyde 3-phosphate + pyruvate + H(+) = 1-deoxy-D-xylulose 5-phosphate + CO2. It functions in the pathway metabolic intermediate biosynthesis; 1-deoxy-D-xylulose 5-phosphate biosynthesis; 1-deoxy-D-xylulose 5-phosphate from D-glyceraldehyde 3-phosphate and pyruvate: step 1/1. Functionally, catalyzes the acyloin condensation reaction between C atoms 2 and 3 of pyruvate and glyceraldehyde 3-phosphate to yield 1-deoxy-D-xylulose-5-phosphate (DXP). The sequence is that of 1-deoxy-D-xylulose-5-phosphate synthase from Listeria innocua serovar 6a (strain ATCC BAA-680 / CLIP 11262).